The chain runs to 286 residues: Aspartate/glutamate leucyltransferase (286 aa).

Belongs to the R-transferase family. Bpt subfamily.

It localises to the cytoplasm. It carries out the reaction N-terminal L-glutamyl-[protein] + L-leucyl-tRNA(Leu) = N-terminal L-leucyl-L-glutamyl-[protein] + tRNA(Leu) + H(+). The enzyme catalyses N-terminal L-aspartyl-[protein] + L-leucyl-tRNA(Leu) = N-terminal L-leucyl-L-aspartyl-[protein] + tRNA(Leu) + H(+). Functions in the N-end rule pathway of protein degradation where it conjugates Leu from its aminoacyl-tRNA to the N-termini of proteins containing an N-terminal aspartate or glutamate. The sequence is that of Aspartate/glutamate leucyltransferase from Jannaschia sp. (strain CCS1).